The following is a 246-amino-acid chain: Probable fimbrial chaperone YadV (246 aa).

The signal sequence occupies residues M1 to A25.

Belongs to the periplasmic pilus chaperone family.

The protein resides in the periplasm. In terms of biological role, part of the yadCKLM-htrE-yadVN fimbrial operon. Could contribute to adhesion to various surfaces in specific environmental niches. The sequence is that of Probable fimbrial chaperone YadV (yadV) from Escherichia coli (strain K12).